The primary structure comprises 237 residues: tRNA (guanine-N(7)-)-methyltransferase (237 aa).

Residues 1–24 form a disordered region; that stretch reads MTAHKPGDPTTLNRLYGRSKGKPL. The S-adenosyl-L-methionine site is built by glutamate 62, glutamate 87, aspartate 119, and aspartate 141. Residue aspartate 141 is part of the active site. Residues lysine 145, aspartate 177, and 216–219 contribute to the substrate site; that span reads TRYE.

Belongs to the class I-like SAM-binding methyltransferase superfamily. TrmB family.

The enzyme catalyses guanosine(46) in tRNA + S-adenosyl-L-methionine = N(7)-methylguanosine(46) in tRNA + S-adenosyl-L-homocysteine. It functions in the pathway tRNA modification; N(7)-methylguanine-tRNA biosynthesis. In terms of biological role, catalyzes the formation of N(7)-methylguanine at position 46 (m7G46) in tRNA. The protein is tRNA (guanine-N(7)-)-methyltransferase of Sphingopyxis alaskensis (strain DSM 13593 / LMG 18877 / RB2256) (Sphingomonas alaskensis).